The sequence spans 259 residues: 5'-nucleotidase SurE (259 aa).

A divalent metal cation contacts are provided by Asp8, Asp9, Ser40, and Asn92.

The protein belongs to the SurE nucleotidase family. Requires a divalent metal cation as cofactor.

The protein resides in the cytoplasm. The enzyme catalyses a ribonucleoside 5'-phosphate + H2O = a ribonucleoside + phosphate. Functionally, nucleotidase that shows phosphatase activity on nucleoside 5'-monophosphates. The sequence is that of 5'-nucleotidase SurE from Xanthomonas oryzae pv. oryzae (strain MAFF 311018).